The following is a 218-amino-acid chain: Probable GTP-binding protein EngB (218 aa).

An EngB-type G domain is found at 44–218 (DRIEVCFAGR…LRATIATIET (175 aa)). Residues 52–59 (GRSNVGKS), 79–83 (GRTQE), 97–100 (DLPG), 164–167 (TKSD), and 198–200 (TSS) each bind GTP. The Mg(2+) site is built by serine 59 and threonine 81.

It belongs to the TRAFAC class TrmE-Era-EngA-EngB-Septin-like GTPase superfamily. EngB GTPase family. It depends on Mg(2+) as a cofactor.

Its function is as follows. Necessary for normal cell division and for the maintenance of normal septation. In Jannaschia sp. (strain CCS1), this protein is Probable GTP-binding protein EngB.